The following is a 145-amino-acid chain: Large ribosomal subunit protein uL15 (145 aa).

The segment at 1-42 (MELHTLKATPGSRKAKHRVGRGHAAGKGKQAGRGQSGQTKRS) is disordered. The segment covering 13–26 (RKAKHRVGRGHAAG) has biased composition (basic residues).

The protein belongs to the universal ribosomal protein uL15 family. Part of the 50S ribosomal subunit.

Binds to the 23S rRNA. The sequence is that of Large ribosomal subunit protein uL15 from Metamycoplasma arthritidis (strain 158L3-1) (Mycoplasma arthritidis).